We begin with the raw amino-acid sequence, 244 residues long: Reticulon-like protein B7 (244 aa).

In terms of domain architecture, Reticulon spans 70 to 244; that stretch reads PADVLLWRDK…EAKFLSKIPH (175 aa). The next 3 membrane-spanning stretches (helical) occupy residues 80 to 100, 103 to 123, and 172 to 192; these read KVTL…GFGG, LLTS…LWSN, and FVMA…FSFL.

It localises to the endoplasmic reticulum membrane. The polypeptide is Reticulon-like protein B7 (RTNLB7) (Arabidopsis thaliana (Mouse-ear cress)).